We begin with the raw amino-acid sequence, 1377 residues long: DNA-directed RNA polymerase subunit beta (1377 aa).

The protein belongs to the RNA polymerase beta chain family. As to quaternary structure, the RNAP catalytic core consists of 2 alpha, 1 beta, 1 beta' and 1 omega subunit. When a sigma factor is associated with the core the holoenzyme is formed, which can initiate transcription.

The catalysed reaction is RNA(n) + a ribonucleoside 5'-triphosphate = RNA(n+1) + diphosphate. Its function is as follows. DNA-dependent RNA polymerase catalyzes the transcription of DNA into RNA using the four ribonucleoside triphosphates as substrates. In Azoarcus sp. (strain BH72), this protein is DNA-directed RNA polymerase subunit beta.